Here is a 387-residue protein sequence, read N- to C-terminus: 3-ketoacyl-CoA thiolase (387 aa).

C91 serves as the catalytic Acyl-thioester intermediate. Active-site proton acceptor residues include H343 and C373.

Belongs to the thiolase-like superfamily. Thiolase family. In terms of assembly, heterotetramer of two alpha chains (FadB) and two beta chains (FadA).

The protein resides in the cytoplasm. The catalysed reaction is an acyl-CoA + acetyl-CoA = a 3-oxoacyl-CoA + CoA. The protein operates within lipid metabolism; fatty acid beta-oxidation. Its function is as follows. Catalyzes the final step of fatty acid oxidation in which acetyl-CoA is released and the CoA ester of a fatty acid two carbons shorter is formed. This chain is 3-ketoacyl-CoA thiolase, found in Vibrio vulnificus (strain CMCP6).